A 126-amino-acid polypeptide reads, in one-letter code: MSKPKRERSLPDNEAKAVARMLRVSPQKLNLVAQMIRGRKASAALADLQFSRKRIAVDVKKCLESAIANAENNHELEVDDLVVSQAFVGKGIVMKRFSPRGRGRSGRVFKPFSQLTIIVRQVEASA.

The protein belongs to the universal ribosomal protein uL22 family. Part of the 50S ribosomal subunit.

This protein binds specifically to 23S rRNA; its binding is stimulated by other ribosomal proteins, e.g. L4, L17, and L20. It is important during the early stages of 50S assembly. It makes multiple contacts with different domains of the 23S rRNA in the assembled 50S subunit and ribosome. Its function is as follows. The globular domain of the protein is located near the polypeptide exit tunnel on the outside of the subunit, while an extended beta-hairpin is found that lines the wall of the exit tunnel in the center of the 70S ribosome. This is Large ribosomal subunit protein uL22 from Bradyrhizobium sp. (strain BTAi1 / ATCC BAA-1182).